We begin with the raw amino-acid sequence, 57 residues long: YLTDHYFKVDLNSTVTQQRFLLDPSELAGITIMQPSDSNIEWLKQYRDDVATWLENS.

Residues 1-57 are Extracellular-facing; the sequence is YLTDHYFKVDLNSTVTQQRFLLDPSELAGITIMQPSDSNIEWLKQYRDDVATWLENS. N12 carries an N-linked (GlcNAc...) asparagine glycan.

This sequence belongs to the peptidase M1 family. In terms of assembly, homodimer; disulfide-linked. Zn(2+) is required as a cofactor.

It is found in the cell membrane. The catalysed reaction is Release of N-terminal glutamate (and to a lesser extent aspartate) from a peptide.. With respect to regulation, inhibited by the aminopeptidase competitive inhibitors amastatin (Leu and acidic inhibitor), and bestatin (Leu inhibitor), by chelating agents EDTA, and 1,10-Phenanthroline, as well as by Zn(2+) ions. Substrate specificity is modulated by Ca(2+), Ba(2+), and Mn(2+) ions which enhances the enzymatic activity for cleavage of acidic residues. Functionally, venom protein that cleaves N-terminal acidic residues from peptides with high potency in presence of calcium. It may have several roles in venom including alteration of blood pressure by cleaving circulating angiotensin-2, general degradation of host tissue, increase of permeability to other venom components, and/or processing of other toxins in the venom. This chain is Aminopeptidase A, found in Gloydius blomhoffii (Mamushi).